A 555-amino-acid polypeptide reads, in one-letter code: uncharacterized protein (555 aa).

5 helical membrane passes run 13–30, 35–57, 72–91, 98–120, and 157–179; these read ALQA…GLGL, FWGV…HFGL, LVIF…FSSF, LNML…SYAT, and TPAL…AVLL. RCK C-terminal domains lie at 188–273 and 282–366; these read EDLE…LFGE and KEDI…VLGN. 6 helical membrane-spanning segments follow: residues 376–398, 408–430, 437–459, 469–491, 498–517, and 532–554; these read LVVI…SIPG, AGGP…MITY, LMLR…GAHF, LLWI…FVAF, FGSV…ALNY, and ATVY…MFLL.

The protein belongs to the AAE transporter (TC 2.A.81) family.

Its subcellular location is the cell membrane. This is an uncharacterized protein from Bacteroides thetaiotaomicron (strain ATCC 29148 / DSM 2079 / JCM 5827 / CCUG 10774 / NCTC 10582 / VPI-5482 / E50).